A 953-amino-acid polypeptide reads, in one-letter code: Protein translocase subunit SecA (953 aa).

Residues glutamine 84, 102–106 (GEGKT), and aspartate 491 each bind ATP. Residues 832-953 (EPEPAPEQPS…RAEAKKNKRR (122 aa)) are disordered. Residues 841–865 (SVPVSVSRSAEPTPDLQAAAEAAAA) show a composition bias toward low complexity. Residues 898–907 (KGLDAPEKQR) show a composition bias toward basic and acidic residues. Residues 908–934 (LNYSGPTEQGGVQTTSESAGEQGNGTS) show a composition bias toward polar residues. Residues 940–953 (RAAARAEAKKNKRR) are compositionally biased toward basic and acidic residues.

This sequence belongs to the SecA family. In terms of assembly, monomer and homodimer. Part of the essential Sec protein translocation apparatus which comprises SecA, SecYEG and auxiliary proteins SecDF. Other proteins may also be involved.

It localises to the cell membrane. It is found in the cytoplasm. It catalyses the reaction ATP + H2O + cellular proteinSide 1 = ADP + phosphate + cellular proteinSide 2.. Functionally, part of the Sec protein translocase complex. Interacts with the SecYEG preprotein conducting channel. Has a central role in coupling the hydrolysis of ATP to the transfer of proteins into and across the cell membrane, serving as an ATP-driven molecular motor driving the stepwise translocation of polypeptide chains across the membrane. The sequence is that of Protein translocase subunit SecA from Saccharopolyspora erythraea (strain ATCC 11635 / DSM 40517 / JCM 4748 / NBRC 13426 / NCIMB 8594 / NRRL 2338).